The following is a 64-amino-acid chain: Large ribosomal subunit protein bL28 (64 aa).

This sequence belongs to the bacterial ribosomal protein bL28 family.

The protein is Large ribosomal subunit protein bL28 of Syntrophobacter fumaroxidans (strain DSM 10017 / MPOB).